Consider the following 508-residue polypeptide: Sugar transport protein 12 (508 aa).

Over 1-22 the chain is Cytoplasmic; the sequence is MPSVGIVIGDGKKEYPGKLTLY. 12 consecutive transmembrane segments (helical) span residues 23–43, 80–100, 118–138, 141–161, 172–192, 201–221, 294–314, 317–337, 347–367, 383–403, 426–446, and 451–471; these read VTVT…DIGI, VSLT…SLVA, VLFC…MLIV, LLLG…LSEM, IGFQ…NFFF, LSLG…LILP, LTGI…IGFG, AALI…VVSI, FLFL…AAAI, WYAI…AWSW, ITVS…LMML, and FGLF…VYLF. Topologically, residues 472–508 are cytoplasmic; the sequence is LPETRGVPIEEMNRVWRSHWYWSKFVDAEKNLTKVVI.

Belongs to the major facilitator superfamily. Sugar transporter (TC 2.A.1.1) family.

The protein localises to the membrane. Its function is as follows. Mediates an active uptake of hexoses, probably by sugar/hydrogen symport. The sequence is that of Sugar transport protein 12 (STP12) from Arabidopsis thaliana (Mouse-ear cress).